A 119-amino-acid polypeptide reads, in one-letter code: Immunoglobulin heavy variable 3-72 (119 aa).

An N-terminal signal peptide occupies residues 1–19; it reads MEFGLSWVFLVVILQGVQC. Residues 20–44 are framework-1; that stretch reads EVQLVESGGGLVQPGGSLRLSCAAS. The 100-residue stretch at 20-119 folds into the Ig-like domain; the sequence is EVQLVESGGG…EDTAVYYCAR (100 aa). A disulfide bridge links Cys-41 with Cys-117. A complementarity-determining-1 region spans residues 45-52; it reads GFTFSDHY. Residues 53-69 are framework-2; sequence MDWVRQAPGKGLEWVGR. Positions 70–79 are complementarity-determining-2; it reads TRNKANSYTT. Residues 80–117 form a framework-3 region; it reads EYAASVKGRFTISRDDSKNSLYLQMNSLKTEDTAVYYC. The interval 118-119 is complementarity-determining-3; that stretch reads AR.

As to quaternary structure, immunoglobulins are composed of two identical heavy chains and two identical light chains; disulfide-linked.

Its subcellular location is the secreted. The protein localises to the cell membrane. V region of the variable domain of immunoglobulin heavy chains that participates in the antigen recognition. Immunoglobulins, also known as antibodies, are membrane-bound or secreted glycoproteins produced by B lymphocytes. In the recognition phase of humoral immunity, the membrane-bound immunoglobulins serve as receptors which, upon binding of a specific antigen, trigger the clonal expansion and differentiation of B lymphocytes into immunoglobulins-secreting plasma cells. Secreted immunoglobulins mediate the effector phase of humoral immunity, which results in the elimination of bound antigens. The antigen binding site is formed by the variable domain of one heavy chain, together with that of its associated light chain. Thus, each immunoglobulin has two antigen binding sites with remarkable affinity for a particular antigen. The variable domains are assembled by a process called V-(D)-J rearrangement and can then be subjected to somatic hypermutations which, after exposure to antigen and selection, allow affinity maturation for a particular antigen. This chain is Immunoglobulin heavy variable 3-72, found in Homo sapiens (Human).